The chain runs to 322 residues: Mas-related G-protein coupled receptor member B5 (322 aa).

At 1–34 the chain is on the extracellular side; it reads MGLTTPAWNINNTVVNGSNNTEHFSCVSKFNTLN. N11, N16, and N19 each carry an N-linked (GlcNAc...) asparagine glycan. Residues 35–55 form a helical membrane-spanning segment; the sequence is FLTVIIAMFGLAGNAIVLWLL. The Cytoplasmic portion of the chain corresponds to 56 to 70; it reads AFHLPRNAFSVYVCN. Residues 71 to 91 form a helical membrane-spanning segment; sequence LACADFLQLCTQILGSLECFL. Over 92 to 98 the chain is Extracellular; the sequence is QLNRRHT. The chain crosses the membrane as a helical span at residues 99-119; the sequence is FFLTVVFMFAYLAGLCMIAAI. The Cytoplasmic segment spans residues 120–147; that stretch reads SVERSLSVMWPIWYHCQRPRHTSSIMCA. Residues 148 to 168 traverse the membrane as a helical segment; it reads LLWAFCLLLNFLLGEGCGLLF. The Extracellular portion of the chain corresponds to 169 to 172; it reads SDPK. A helical transmembrane segment spans residues 173–193; that stretch reads YYFCITCALITTALIILLTVV. At 194-216 the chain is on the cytoplasmic side; the sequence is PSVSSLALLVKMICGSHRIPVTR. A helical membrane pass occupies residues 217–237; that stretch reads FYVTIALTLVVFIFLGLPFGI. The Extracellular segment spans residues 238–260; it reads YSSFLIMFKEFQSIFSYHVLEVT. Residues 261 to 281 traverse the membrane as a helical segment; it reads IFLSCVNSCANPIIYFLVGSI. The Cytoplasmic portion of the chain corresponds to 282–322; it reads RQHRLQWQSLKLLLQRAMQDTPEEDSGERVPSQRSGELESV. The interval 302 to 322 is disordered; sequence TPEEDSGERVPSQRSGELESV.

It belongs to the G-protein coupled receptor 1 family. Mas subfamily.

The protein localises to the membrane. Its function is as follows. Orphan receptor. Probably involved in the function of nociceptive neurons. May regulate nociceptor function and/or development, including the sensation or modulation of pain. This chain is Mas-related G-protein coupled receptor member B5 (Mrgprb5), found in Mus musculus (Mouse).